Reading from the N-terminus, the 277-residue chain is 4-hydroxy-3-methylbut-2-enyl diphosphate reductase (277 aa).

A [4Fe-4S] cluster-binding site is contributed by Cys12. His36 and His70 together coordinate (2E)-4-hydroxy-3-methylbut-2-enyl diphosphate. The dimethylallyl diphosphate site is built by His36 and His70. Isopentenyl diphosphate is bound by residues His36 and His70. Cys92 provides a ligand contact to [4Fe-4S] cluster. His120 lines the (2E)-4-hydroxy-3-methylbut-2-enyl diphosphate pocket. His120 contacts dimethylallyl diphosphate. His120 serves as a coordination point for isopentenyl diphosphate. The Proton donor role is filled by Glu122. Thr160 provides a ligand contact to (2E)-4-hydroxy-3-methylbut-2-enyl diphosphate. Cys188 is a binding site for [4Fe-4S] cluster. The (2E)-4-hydroxy-3-methylbut-2-enyl diphosphate site is built by Ser216, Ser217, Asn218, and Ser260. Dimethylallyl diphosphate-binding residues include Ser216, Ser217, Asn218, and Ser260. Isopentenyl diphosphate-binding residues include Ser216, Ser217, Asn218, and Ser260.

It belongs to the IspH family. Requires [4Fe-4S] cluster as cofactor.

The catalysed reaction is isopentenyl diphosphate + 2 oxidized [2Fe-2S]-[ferredoxin] + H2O = (2E)-4-hydroxy-3-methylbut-2-enyl diphosphate + 2 reduced [2Fe-2S]-[ferredoxin] + 2 H(+). It catalyses the reaction dimethylallyl diphosphate + 2 oxidized [2Fe-2S]-[ferredoxin] + H2O = (2E)-4-hydroxy-3-methylbut-2-enyl diphosphate + 2 reduced [2Fe-2S]-[ferredoxin] + 2 H(+). It functions in the pathway isoprenoid biosynthesis; dimethylallyl diphosphate biosynthesis; dimethylallyl diphosphate from (2E)-4-hydroxy-3-methylbutenyl diphosphate: step 1/1. The protein operates within isoprenoid biosynthesis; isopentenyl diphosphate biosynthesis via DXP pathway; isopentenyl diphosphate from 1-deoxy-D-xylulose 5-phosphate: step 6/6. Its function is as follows. Catalyzes the conversion of 1-hydroxy-2-methyl-2-(E)-butenyl 4-diphosphate (HMBPP) into a mixture of isopentenyl diphosphate (IPP) and dimethylallyl diphosphate (DMAPP). Acts in the terminal step of the DOXP/MEP pathway for isoprenoid precursor biosynthesis. The protein is 4-hydroxy-3-methylbut-2-enyl diphosphate reductase of Sulfurovum sp. (strain NBC37-1).